Consider the following 357-residue polypeptide: UDP-N-acetylglucosamine--N-acetylmuramyl-(pentapeptide) pyrophosphoryl-undecaprenol N-acetylglucosamine transferase (357 aa).

UDP-N-acetyl-alpha-D-glucosamine contacts are provided by residues 15–17, Asn-124, Arg-165, Ser-194, and Gln-288; that span reads TGG.

It belongs to the glycosyltransferase 28 family. MurG subfamily.

The protein resides in the cell inner membrane. It carries out the reaction di-trans,octa-cis-undecaprenyl diphospho-N-acetyl-alpha-D-muramoyl-L-alanyl-D-glutamyl-meso-2,6-diaminopimeloyl-D-alanyl-D-alanine + UDP-N-acetyl-alpha-D-glucosamine = di-trans,octa-cis-undecaprenyl diphospho-[N-acetyl-alpha-D-glucosaminyl-(1-&gt;4)]-N-acetyl-alpha-D-muramoyl-L-alanyl-D-glutamyl-meso-2,6-diaminopimeloyl-D-alanyl-D-alanine + UDP + H(+). The protein operates within cell wall biogenesis; peptidoglycan biosynthesis. Cell wall formation. Catalyzes the transfer of a GlcNAc subunit on undecaprenyl-pyrophosphoryl-MurNAc-pentapeptide (lipid intermediate I) to form undecaprenyl-pyrophosphoryl-MurNAc-(pentapeptide)GlcNAc (lipid intermediate II). The polypeptide is UDP-N-acetylglucosamine--N-acetylmuramyl-(pentapeptide) pyrophosphoryl-undecaprenol N-acetylglucosamine transferase (Trichormus variabilis (strain ATCC 29413 / PCC 7937) (Anabaena variabilis)).